Consider the following 263-residue polypeptide: Probable ABC transporter permease protein ycf63 (263 aa).

The next 5 membrane-spanning stretches (helical) occupy residues I43 to F63, E70 to T89, I150 to M170, I188 to I208, and S230 to F250.

The protein belongs to the MlaE permease family.

The protein resides in the plastid. The protein localises to the chloroplast membrane. Could be part of an ABC transporter complex. This chain is Probable ABC transporter permease protein ycf63 (ycf63), found in Pyropia yezoensis (Susabi-nori).